A 120-amino-acid polypeptide reads, in one-letter code: UPF0102 protein HSM_1206 (120 aa).

Belongs to the UPF0102 family.

In Histophilus somni (strain 2336) (Haemophilus somnus), this protein is UPF0102 protein HSM_1206.